We begin with the raw amino-acid sequence, 217 residues long: Small ribosomal subunit protein uS3 (217 aa).

The region spanning 38 to 106 is the KH type-2 domain; the sequence is IRKFLKKRLS…KVTLDIQEVR (69 aa).

It belongs to the universal ribosomal protein uS3 family. Part of the 30S ribosomal subunit. Forms a tight complex with proteins S10 and S14.

In terms of biological role, binds the lower part of the 30S subunit head. Binds mRNA in the 70S ribosome, positioning it for translation. The sequence is that of Small ribosomal subunit protein uS3 from Desulfotalea psychrophila (strain LSv54 / DSM 12343).